The primary structure comprises 390 residues: Heme chaperone HemW (390 aa).

Residues 15 to 254 (PMPGQPFGVY…DARLSAAGFA (240 aa)) enclose the Radical SAM core domain. Residue tyrosine 24 coordinates S-adenosyl-L-methionine. [4Fe-4S] cluster is bound by residues cysteine 30, cysteine 34, and cysteine 37. S-adenosyl-L-methionine is bound by residues glycine 82, 83-84 (GT), glutamate 115, glutamine 142, arginine 154, and aspartate 179.

The protein belongs to the anaerobic coproporphyrinogen-III oxidase family. HemW subfamily. [4Fe-4S] cluster serves as cofactor.

The protein localises to the cytoplasm. Its function is as follows. Probably acts as a heme chaperone, transferring heme to an unknown acceptor. Binds one molecule of heme per monomer, possibly covalently. Binds 1 [4Fe-4S] cluster. The cluster is coordinated with 3 cysteines and an exchangeable S-adenosyl-L-methionine. This chain is Heme chaperone HemW, found in Mycobacterium tuberculosis (strain CDC 1551 / Oshkosh).